Consider the following 245-residue polypeptide: MFELTGRKALVTGASGGIGEAIARVLHAQGAIVGLHGTRVEKLETLAAELGDRVKLFPANLSNRDEVKALGQKAEADLEGVDILVNNAGITKDGLFVRMSDADWDTVLEVNLTAVFRLTRELTHPMMRRRHGRIINITSVVGVTGNPGQTNYCASKAGMIGFSKSLAQEIATRNITVNCVAPGFIESAMTDKLNDKQKEAIMAAIPTRRMGTSVEVASAVAYLASNEAAYVTGQTIHVNGGLAMI.

11–35 (VTGASGGIGEAIARVLHAQGAIVGL) is a binding site for NAD(+). Residue Ser-139 participates in substrate binding. The active-site Proton acceptor is the Tyr-152.

The protein belongs to the short-chain dehydrogenases/reductases (SDR) family.

Its function is as follows. Proposed to modify Nod factor fatty acyl chain. The sequence is that of Nodulation protein G (nodG) from Rhizobium sp. (strain N33).